The sequence spans 368 residues: 3-isopropylmalate dehydrogenase (368 aa).

An NAD(+)-binding site is contributed by 79 to 92 (GPRYEGLPWDLRPE). Substrate-binding residues include arginine 99, arginine 109, arginine 138, and aspartate 228. Aspartate 228, aspartate 252, and aspartate 256 together coordinate Mg(2+). 292–304 (GSAPDIAGQDRAN) is a binding site for NAD(+).

It belongs to the isocitrate and isopropylmalate dehydrogenases family. LeuB type 1 subfamily. Homodimer. Mg(2+) is required as a cofactor. Requires Mn(2+) as cofactor.

It is found in the cytoplasm. It catalyses the reaction (2R,3S)-3-isopropylmalate + NAD(+) = 4-methyl-2-oxopentanoate + CO2 + NADH. It participates in amino-acid biosynthesis; L-leucine biosynthesis; L-leucine from 3-methyl-2-oxobutanoate: step 3/4. Catalyzes the oxidation of 3-carboxy-2-hydroxy-4-methylpentanoate (3-isopropylmalate) to 3-carboxy-4-methyl-2-oxopentanoate. The product decarboxylates to 4-methyl-2 oxopentanoate. This is 3-isopropylmalate dehydrogenase from Symbiobacterium thermophilum (strain DSM 24528 / JCM 14929 / IAM 14863 / T).